We begin with the raw amino-acid sequence, 131 residues long: EG45-like domain containing protein (131 aa).

The signal sequence occupies residues 1 to 24 (MGVGTKVLVITTMAICLISSAAYA). The Expansin-like EG45; incomplete domain occupies 27–131 (GTATFYTPPY…GKIKIEFNQA (105 aa)). A disulfide bond links C73 and C85.

In terms of tissue distribution, expressed in the outer layer of xylem and the vascular cambial zone of roots, in shoot cambium, but not in leaves.

It is found in the secreted. In terms of biological role, might have a systemic role in water and solute homeostasis. Has no expansin-like activity. The protein is EG45-like domain containing protein (CjBAp12) of Citrus jambhiri (Rough lemon).